Consider the following 500-residue polypeptide: E3 ubiquitin-protein ligase TRIM69 (500 aa).

A necessary for nuclear localization region spans residues 1-152 (MEVSTNPSSN…SVGQSKEFLQ (152 aa)). The RING-type zinc-finger motif lies at 41 to 82 (CPLCNDWFRDPLMLSCGHNFCEACIQDFWRLQAKETFCPECK). Positions 161-255 (TEELAIQQGQ…QCLLAKDMLV (95 aa)) form a coiled coil. The B30.2/SPRY domain maps to 305–500 (PIQYMVWREM…KEPLHILHPQ (196 aa)). Serine 341 bears the Phosphoserine mark.

This sequence belongs to the TRIM/RBCC family. In terms of assembly, homo-multimer; required for antiviral activity. Interacts with PML. Phosphorylated. Phosphorylation is necessary for nuclear localization.

The protein localises to the cytoplasm. It localises to the nucleus. It is found in the nucleus speckle. The protein resides in the cytoskeleton. Its subcellular location is the microtubule organizing center. The protein localises to the centrosome. The enzyme catalyses S-ubiquitinyl-[E2 ubiquitin-conjugating enzyme]-L-cysteine + [acceptor protein]-L-lysine = [E2 ubiquitin-conjugating enzyme]-L-cysteine + N(6)-ubiquitinyl-[acceptor protein]-L-lysine.. It functions in the pathway protein modification; protein ubiquitination. E3 ubiquitin ligase that plays an important role in antiviral immunity by restricting different viral infections including dengue virus or vesicular stomatitis indiana virus. Ubiquitinates viral proteins such as dengue virus NS3 thereby limiting infection. In addition, acts as a key mediator of type I interferon induced microtubule stabilization by directly associating to microtubules independently of its E3 ligase activity. Also plays a role in cataract formation together with TP53. Mechanistically, inhibits UVB-induced cell apoptosis and reactive oxygen species (ROS) production by inducing TP53 ubiquitination. Regulates centrosome dynamics and mitotic progression by ubiquitinating STK3/MST2; leading to its redistribution to the perinuclear cytoskeleton and subsequent phosphorylation by PLK1. This is E3 ubiquitin-protein ligase TRIM69 (TRIM69) from Homo sapiens (Human).